The primary structure comprises 341 residues: tRNA N6-adenosine threonylcarbamoyltransferase (341 aa).

Positions 111 and 115 each coordinate Fe cation. Substrate-binding positions include 133–137, Asp166, Gly179, Asp183, and Asn273; that span reads AVSGG. A Fe cation-binding site is contributed by Asp301.

This sequence belongs to the KAE1 / TsaD family. Fe(2+) is required as a cofactor.

The protein localises to the cytoplasm. The enzyme catalyses L-threonylcarbamoyladenylate + adenosine(37) in tRNA = N(6)-L-threonylcarbamoyladenosine(37) in tRNA + AMP + H(+). Functionally, required for the formation of a threonylcarbamoyl group on adenosine at position 37 (t(6)A37) in tRNAs that read codons beginning with adenine. Is involved in the transfer of the threonylcarbamoyl moiety of threonylcarbamoyl-AMP (TC-AMP) to the N6 group of A37, together with TsaE and TsaB. TsaD likely plays a direct catalytic role in this reaction. In Geotalea daltonii (strain DSM 22248 / JCM 15807 / FRC-32) (Geobacter daltonii), this protein is tRNA N6-adenosine threonylcarbamoyltransferase.